A 66-amino-acid polypeptide reads, in one-letter code: Large ribosomal subunit protein bL33c (66 aa).

This sequence belongs to the bacterial ribosomal protein bL33 family.

The protein resides in the plastid. The protein localises to the chloroplast. The protein is Large ribosomal subunit protein bL33c of Chloranthus spicatus (Chulantree).